The chain runs to 257 residues: 3-deoxy-manno-octulosonate cytidylyltransferase (257 aa).

It belongs to the KdsB family.

The protein resides in the cytoplasm. The enzyme catalyses 3-deoxy-alpha-D-manno-oct-2-ulosonate + CTP = CMP-3-deoxy-beta-D-manno-octulosonate + diphosphate. It participates in nucleotide-sugar biosynthesis; CMP-3-deoxy-D-manno-octulosonate biosynthesis; CMP-3-deoxy-D-manno-octulosonate from 3-deoxy-D-manno-octulosonate and CTP: step 1/1. The protein operates within bacterial outer membrane biogenesis; lipopolysaccharide biosynthesis. In terms of biological role, activates KDO (a required 8-carbon sugar) for incorporation into bacterial lipopolysaccharide in Gram-negative bacteria. The chain is 3-deoxy-manno-octulosonate cytidylyltransferase from Xylella fastidiosa (strain M12).